Here is a 602-residue protein sequence, read N- to C-terminus: Elongation factor 4 (602 aa).

Positions 2 to 184 constitute a tr-type G domain; it reads DHIRNFSIIA…AVIARMPPPK (183 aa). GTP contacts are provided by residues 14–19 and 131–134; these read DHGKST and NKMD.

This sequence belongs to the TRAFAC class translation factor GTPase superfamily. Classic translation factor GTPase family. LepA subfamily.

It localises to the cell inner membrane. It catalyses the reaction GTP + H2O = GDP + phosphate + H(+). Required for accurate and efficient protein synthesis under certain stress conditions. May act as a fidelity factor of the translation reaction, by catalyzing a one-codon backward translocation of tRNAs on improperly translocated ribosomes. Back-translocation proceeds from a post-translocation (POST) complex to a pre-translocation (PRE) complex, thus giving elongation factor G a second chance to translocate the tRNAs correctly. Binds to ribosomes in a GTP-dependent manner. This is Elongation factor 4 from Leptothrix cholodnii (strain ATCC 51168 / LMG 8142 / SP-6) (Leptothrix discophora (strain SP-6)).